A 346-amino-acid chain; its full sequence is S-adenosylmethionine:tRNA ribosyltransferase-isomerase (346 aa).

The protein belongs to the QueA family. Monomer.

The protein localises to the cytoplasm. It catalyses the reaction 7-aminomethyl-7-carbaguanosine(34) in tRNA + S-adenosyl-L-methionine = epoxyqueuosine(34) in tRNA + adenine + L-methionine + 2 H(+). It participates in tRNA modification; tRNA-queuosine biosynthesis. Functionally, transfers and isomerizes the ribose moiety from AdoMet to the 7-aminomethyl group of 7-deazaguanine (preQ1-tRNA) to give epoxyqueuosine (oQ-tRNA). The sequence is that of S-adenosylmethionine:tRNA ribosyltransferase-isomerase from Nitrosomonas eutropha (strain DSM 101675 / C91 / Nm57).